We begin with the raw amino-acid sequence, 750 residues long: Tegument protein UL46 homolog (750 aa).

Disordered stretches follow at residues 437–484 (FCCP…SPRT), 525–593 (QRSD…DYMR), 610–669 (YTPY…EVVY), and 692–750 (SASR…VSSL). The span at 465-484 (LRSSRQLPTSPPSNIVSPRT) shows a compositional bias: polar residues. A compositionally biased stretch (low complexity) spans 528–540 (DSSSSDNSTCSST). The span at 541 to 553 (ETQYITLPSTPSP) shows a compositional bias: polar residues. Basic and acidic residues-rich tracts occupy residues 710–727 (VCRE…DGFI) and 739–750 (KHPDQTERVSSL).

The protein belongs to the herpesviridae HHV-1 VP11/12 protein family.

It localises to the virion tegument. It is found in the host cell membrane. In terms of biological role, modulates alpha trans-inducing factor-dependent activation of alpha genes. The sequence is that of Tegument protein UL46 homolog from Equine herpesvirus 1 (strain V592) (EHV-1).